The primary structure comprises 246 residues: Serine protease 1 (246 aa).

An N-terminal signal peptide occupies residues 1–17 (MKTFIFLALLGAAVAFP). Positions 18 to 23 (VDDDDK) are cleaved as a propeptide — activation peptide. Residues 24–244 (IVGGYTCGAN…YVSWIKQTIA (221 aa)) enclose the Peptidase S1 domain. Intrachain disulfides connect C30/C160, C48/C64, C132/C233, C139/C206, C171/C185, and C196/C220. Catalysis depends on H63, which acts as the Charge relay system. Residues E75, N77, V80, and E85 each coordinate Ca(2+). The active-site Charge relay system is D107. Substrate-binding positions include 194-195 (DS), 197-198 (QG), and S200. Catalysis depends on S200, which acts as the Charge relay system.

It belongs to the peptidase S1 family. In terms of assembly, interacts with SERPINA1. It depends on Ca(2+) as a cofactor. Autocatalytic cleavage after Lys-23 leads to beta-trypsin by releasing a terminal hexapeptide. Subsequent cleavage after Lys-148 leads to alpha-trypsin. Further cleavage after Lys-193 yields pseudotrypsin. A cleavage may also occur after Arg-122. Post-translationally, not sulfated on tyrosine residue(s). As to expression, synthesized in the acinar cells of the pancreas.

It is found in the secreted. Its subcellular location is the extracellular space. It catalyses the reaction Preferential cleavage: Arg-|-Xaa, Lys-|-Xaa.. Is inhibited by scorpion cyclotide trypsin inhibitor TopI1. The polypeptide is Serine protease 1 (PRSS1) (Bos taurus (Bovine)).